Reading from the N-terminus, the 446-residue chain is Methylenetetrahydrofolate--tRNA-(uracil-5-)-methyltransferase TrmFO (446 aa).

An FAD-binding site is contributed by 11-16 (GGGLAG).

The protein belongs to the MnmG family. TrmFO subfamily. It depends on FAD as a cofactor.

It localises to the cytoplasm. It carries out the reaction uridine(54) in tRNA + (6R)-5,10-methylene-5,6,7,8-tetrahydrofolate + NADH + H(+) = 5-methyluridine(54) in tRNA + (6S)-5,6,7,8-tetrahydrofolate + NAD(+). It catalyses the reaction uridine(54) in tRNA + (6R)-5,10-methylene-5,6,7,8-tetrahydrofolate + NADPH + H(+) = 5-methyluridine(54) in tRNA + (6S)-5,6,7,8-tetrahydrofolate + NADP(+). Its function is as follows. Catalyzes the folate-dependent formation of 5-methyl-uridine at position 54 (M-5-U54) in all tRNAs. This is Methylenetetrahydrofolate--tRNA-(uracil-5-)-methyltransferase TrmFO from Oleidesulfovibrio alaskensis (strain ATCC BAA-1058 / DSM 17464 / G20) (Desulfovibrio alaskensis).